A 173-amino-acid chain; its full sequence is Shikimate kinase (173 aa).

10–15 (GSGKTT) is a binding site for ATP. Position 14 (T14) interacts with Mg(2+). D32, R56, and G78 together coordinate substrate. R117 is a binding site for ATP. R135 lines the substrate pocket.

Belongs to the shikimate kinase family. In terms of assembly, monomer. The cofactor is Mg(2+).

It localises to the cytoplasm. The enzyme catalyses shikimate + ATP = 3-phosphoshikimate + ADP + H(+). The protein operates within metabolic intermediate biosynthesis; chorismate biosynthesis; chorismate from D-erythrose 4-phosphate and phosphoenolpyruvate: step 5/7. Catalyzes the specific phosphorylation of the 3-hydroxyl group of shikimic acid using ATP as a cosubstrate. The polypeptide is Shikimate kinase (Limosilactobacillus fermentum (strain NBRC 3956 / LMG 18251) (Lactobacillus fermentum)).